Here is a 910-residue protein sequence, read N- to C-terminus: MSSKISDLTSTQNKPLLVTQQLIEKYYEQILGTSQNIIPILNPKNKFIRPSKDNSDVERVEEDAGKRLQTGKNKTTNKVNFNLDTGNEDKLDDDQETVTENENNDIEMVETDEGEDERQGSSLASKCKSFLYNVFVGNYERDILIDKVCSQKQHAMSFEEWCSAGARLDDLTGKTEWKQKLESPLYDYKLIKDLTSRMREERLNRNYAQLLYIIRTNWVRNLGNMGNVNLYRHSHVGTKYLIDEYMMESRLALESLMESDLDDSYLLGILQQTRRNIGRTALVLSGGGTFGLFHIGVLGTLFELDLLPRVISGSSAGAIVASILSVHHKEEIPVLLNHILDKEFNIFKDDKQKSESENLLIKISRFFKNGTWFDNKHLVNTMIEFLGDLTFREAYNRTGKILNITVSPASLFEQPRLLNNLTAPNVLIWSAVCASCSLPGIFPSSPLYEKDPKTGERKPWTGSSSVKFVDGSVDNDLPISRLSEMFNVDHIIACQVNIHVFPFLKLSLSCVGGEIEDEFSARLKQNLSSIYNFMANEAIHILEIGSEMGIAKNALTKLRSVLSQQYSGDITILPDMCMLFRIKELLSNPTKEFLLREITNGAKATWPKVSIIQNHCGQEFALDKAISYIKGRMIVTSSLKTPFQFADSVIGLIKAPEQTSDESKNPENSTLLTRTPTKGDNHISNVLDDNLLESESTNSLLLLRENASTYGRSPSGFRPRYSITSASLNPRHQRRKSDTISTSRRPAKSFSFSVASPTSRMLRQSSKINGHPPPILQKKTSMGRLMFPMDAKTYDPESHELIPHSASIETPAMVDKKLHFGRKSRYLRHMNKKWVSSSNILYTDSDKEDHPTLRLISNFDSDAMIHSDLAGNFRRHSIDGRPPSQATKSSPFRSRPSSSTQHKSTTSFTQ.

Basic and acidic residues predominate over residues 51-66 (SKDNSDVERVEEDAGK). A disordered region spans residues 51–120 (SKDNSDVERV…TDEGEDERQG (70 aa)). Ser-55 bears the Phosphoserine mark. A compositionally biased stretch (polar residues) spans 70 to 85 (TGKNKTTNKVNFNLDT). The span at 90–116 (KLDDDQETVTENENNDIEMVETDEGED) shows a compositional bias: acidic residues. The PNPLA domain occupies 282–483 (LVLSGGGTFG…DNDLPISRLS (202 aa)). The GXGXXG signature appears at 286–291 (GGGTFG). A GXSXG motif is present at residues 313–317 (GSSAG). The Nucleophile role is filled by Ser-315. The active-site Proton acceptor is Asp-470. Disordered stretches follow at residues 657–683 (EQTS…DNHI) and 713–777 (SPSG…PILQ). Positions 666-683 (PENSTLLTRTPTKGDNHI) are enriched in polar residues. The residue at position 675 (Thr-675) is a Phosphothreonine; by Cdk1. 4 positions are modified to phosphoserine: Ser-737, Ser-749, Ser-751, and Ser-836. Residues 739–768 (TISTSRRPAKSFSFSVASPTSRMLRQSSKI) are compositionally biased toward polar residues. The disordered stretch occupies residues 874 to 910 (RRHSIDGRPPSQATKSSPFRSRPSSSTQHKSTTSFTQ). A compositionally biased stretch (low complexity) spans 889 to 899 (SSPFRSRPSSS). Residue Ser-890 is modified to Phosphoserine; by Cdk1. Polar residues predominate over residues 900–910 (TQHKSTTSFTQ).

Phosphorylation at Thr-675 and Ser-890 by Cdk1/CDC28 stimulates enzyme activity in vivo.

The protein localises to the lipid droplet. It carries out the reaction a triacylglycerol + H2O = a diacylglycerol + a fatty acid + H(+). The enzyme catalyses 1,2,3-tri-(9Z-octadecenoyl)-glycerol + H2O = di-(9Z)-octadecenoylglycerol + (9Z)-octadecenoate + H(+). The catalysed reaction is 1,2-dihexadecanoyl-sn-glycero-3-phosphocholine + H2O = 1-hexadecanoyl-sn-glycero-3-phosphocholine + hexadecanoate + H(+). It catalyses the reaction cholesteryl (9Z-octadecenoate) + H2O = cholesterol + (9Z)-octadecenoate + H(+). It carries out the reaction 1-(9Z-octadecenoyl)-sn-glycero-3-phosphate + (9Z)-octadecenoyl-CoA = 1,2-di-(9Z-octadecenoyl)-sn-glycero-3-phosphate + CoA. With respect to regulation, phosphorylated and activated by cyclin-dependent kinase 1 (Cdk1/CDC28). Loses its lipolytic activity in cells lacking nonpolar lipids, but retains its side activity as lysophospholipid acyltransferase. Lipid particle-localized triacylglycerol (TAG) lipase. The lipid droplet/particle is a lipid storage compartment which serves as a depot of energy and building blocks for membrane lipid biosynthesis. Involved in the mobilization of the non-polar storage lipids triacylglycerols (TAGs) from lipid particles by hydrolysis of TAGs, releasing and supplying specific fatty acids to the appropriate metabolic pathways. Also has steryl ester (SE) hydrolase and phospholipase A(2) (PLA(2)) activities, and catalyzes the acylation of lysophosphatidic acid (LPA). Contributes to early bud formation in late G1 phase of the cell cycle upon phosphorylation and activation by cyclin-dependent kinase 1 (Cdk1/CDC28). The polypeptide is Triacylglycerol lipase 4 (TGL4) (Saccharomyces cerevisiae (strain ATCC 204508 / S288c) (Baker's yeast)).